The sequence spans 265 residues: Mlc titration factor A (265 aa).

Zn(2+)-binding residues include H111, H148, H152, and E211.

The protein belongs to the MtfA family. Interacts with Mlc. It depends on Zn(2+) as a cofactor.

The protein resides in the cytoplasm. Functionally, involved in the modulation of the activity of the glucose-phosphotransferase system (glucose-PTS). Interacts with the transcriptional repressor Mlc, preventing its interaction with DNA and leading to the modulation of expression of genes regulated by Mlc, including ptsG, which encodes the PTS system glucose-specific EIICB component. Shows zinc-dependent metallopeptidase activity. This is Mlc titration factor A from Salmonella enteritidis PT4 (strain P125109).